A 939-amino-acid polypeptide reads, in one-letter code: Translation initiation factor IF-2 (939 aa).

A disordered region spans residues 57–274 (RLKPAAPAAP…APTKKNEQKI (218 aa)). Basic and acidic residues-rich tracts occupy residues 83–122 (MEPK…KESV) and 129–138 (LEQEPPKEEL). 2 stretches are compositionally biased toward polar residues: residues 146–158 (ESAS…SNPL) and 170–180 (VATTLATQTDA). Over residues 208-227 (KRSEEPAPKADRPSLEEART) the composition is skewed to basic and acidic residues. Residues 252–262 (ARKKKKEKKKP) are compositionally biased toward basic residues. Residues 438–607 (ERPPVVTIMG…LVQSELLELK (170 aa)) form the tr-type G domain. The segment at 447 to 454 (GHVDHGKT) is G1. 447–454 (GHVDHGKT) serves as a coordination point for GTP. The tract at residues 472 to 476 (GITQH) is G2. The segment at 493–496 (DTPG) is G3. Residues 493-497 (DTPGH) and 547-550 (NKVD) each bind GTP. The interval 547 to 550 (NKVD) is G4. The interval 583–585 (SAK) is G5.

It belongs to the TRAFAC class translation factor GTPase superfamily. Classic translation factor GTPase family. IF-2 subfamily.

It is found in the cytoplasm. Functionally, one of the essential components for the initiation of protein synthesis. Protects formylmethionyl-tRNA from spontaneous hydrolysis and promotes its binding to the 30S ribosomal subunits. Also involved in the hydrolysis of GTP during the formation of the 70S ribosomal complex. The sequence is that of Translation initiation factor IF-2 from Wolinella succinogenes (strain ATCC 29543 / DSM 1740 / CCUG 13145 / JCM 31913 / LMG 7466 / NCTC 11488 / FDC 602W) (Vibrio succinogenes).